The following is a 455-amino-acid chain: Golgi pH regulator (455 aa).

The next 5 helical transmembrane spans lie at 5-25 (IDSS…WLFF), 46-66 (VTFA…LGVL), 79-99 (LCVI…YFIV), 114-134 (CLLW…FPIL), and 150-170 (VGVI…VNCP). N180 and N243 each carry an N-linked (GlcNAc...) asparagine glycan. Transmembrane regions (helical) follow at residues 290–310 (GYFF…NIVF), 343–363 (ISFI…LITL), 378–398 (VIVL…VLLI), and 425–445 (WFDV…YLAH).

Belongs to the Golgi pH regulator (TC 1.A.38) family. In terms of assembly, homotrimer. Interacts with RABL3; the interaction stabilizes GPR89A.

The protein resides in the golgi apparatus membrane. The catalysed reaction is iodide(out) = iodide(in). It carries out the reaction chloride(in) = chloride(out). The enzyme catalyses bromide(in) = bromide(out). It catalyses the reaction fluoride(in) = fluoride(out). In terms of biological role, voltage-gated channel that enables the transfer of monoatomic anions such as iodide, chloride, bromide and fluoride which may function in counter-ion conductance and participates in Golgi acidification. Plays a role in lymphocyte development, probably by acting as a RABL3 effector in hematopoietic cells. In Bos taurus (Bovine), this protein is Golgi pH regulator.